Reading from the N-terminus, the 86-residue chain is Photosystem I reaction center subunit PsaK (86 aa).

A helical membrane pass occupies residues 15–34 (PWSTQVAMVMITCNLLAIVA).

The protein belongs to the PsaG/PsaK family.

It localises to the plastid. The protein resides in the chloroplast thylakoid membrane. The chain is Photosystem I reaction center subunit PsaK from Pyropia yezoensis (Susabi-nori).